The following is a 314-amino-acid chain: DNA-directed RNA polymerase subunit alpha (314 aa).

The segment at 1–228 (MIEIEKPKIE…EHLNIFVGLT (228 aa)) is alpha N-terminal domain (alpha-NTD). The segment at 245 to 314 (KEKVLEMTIE…ELGLSLRKDD (70 aa)) is alpha C-terminal domain (alpha-CTD).

The protein belongs to the RNA polymerase alpha chain family. As to quaternary structure, homodimer. The RNAP catalytic core consists of 2 alpha, 1 beta, 1 beta' and 1 omega subunit. When a sigma factor is associated with the core the holoenzyme is formed, which can initiate transcription.

The enzyme catalyses RNA(n) + a ribonucleoside 5'-triphosphate = RNA(n+1) + diphosphate. Its function is as follows. DNA-dependent RNA polymerase catalyzes the transcription of DNA into RNA using the four ribonucleoside triphosphates as substrates. In Geobacillus kaustophilus (strain HTA426), this protein is DNA-directed RNA polymerase subunit alpha.